Reading from the N-terminus, the 407-residue chain is MGTTRVCSEVSSGSSKSLSQSLTVSTSTTETVNGFHEFKICGYSLAKGVGVGKYVASDTFMVGGYSWAIYFYPDGKSPEDNSSYVSLFIALASEGADVRALFELTLVDQSGNGKHKVHSHFGRALDSGPYTLKYRGSMWGYKRFFRRSSLESSDYLKENSLLVRCRVGVVKSVTEGPRYYNIPVPVSNLGQQLGNLLESGKGCDVVFQVDGETFNAHKLVLATRSPVFNAQLFGPLGDRNTKCITIEDMEAPIFKVLLHFIYWDELPDMQELIGTDSTLASTLVAQHLLAAADRYALERLKAICESKLCEGVAINTVATTLALAEQHHCLQLKAVCLKFVALPENLKAVMQTDGFDYLKESCPSLLTELLQYVARLSEHSVIVSGHRKEIFADGCDASGRRVKPRLH.

Residues 33–167 (NGFHEFKICG…ENSLLVRCRV (135 aa)) enclose the MATH domain. Positions 203-270 (CDVVFQVDGE…IYWDELPDMQ (68 aa)) constitute a BTB domain.

The protein belongs to the Tdpoz family. In terms of assembly, homodimer or heterodimer with BPM3, BPM5 and BPM6. Interacts with CUL3A and CUL3B. Interacts with RAP2-4 and RAP2-13. Binds to MYB56 at the promoter of FLOWERING LOCUS T (FT). In terms of tissue distribution, ubiquitous.

The protein resides in the nucleus. It participates in protein modification; protein ubiquitination. Functionally, may act as a substrate-specific adapter of an E3 ubiquitin-protein ligase complex (CUL3-RBX1-BTB) which mediates the ubiquitination and subsequent proteasomal degradation of target proteins. The sequence is that of BTB/POZ and MATH domain-containing protein 1 (BPM1) from Arabidopsis thaliana (Mouse-ear cress).